The primary structure comprises 448 residues: FAD-dependent monooxygenase srdH (448 aa).

The FAD site is built by Glu32 and Arg107. Gln227 is an active-site residue. An FAD-binding site is contributed by Asp313.

This sequence belongs to the paxM FAD-dependent monooxygenase family. The cofactor is FAD.

In terms of biological role, highly reducing polyketide synthase; part of the gene cluster that mediates the biosynthesis of sordarial, a salicylic aldehyde structurally related to the phytotoxin pyriculol. The most interesting aspect of this pathway is formation of an aromatic product from the highly reducing polyketide synthase srdA. SrdA synthesizes a reduced polyketide chain from one molecule of acetyl-CoA and five molecules of malonyl-CoA. The polyketide chain is then reductively released as an aldehyde. The oxidoreductases srdC, srdD and srdE then oxidize one of the hydroxy groups to facilitate the intramolecular aldol condensation, followed by dehydration to yield a salicylic aldehyde. This aldehyde can undergo facile reduction by endogenous reductases to yield the alcohol 1-hydroxy-2-hydroxymethyl-3-pent-1,3-dienylbenzene. The flavin-dependent srdI counteract against the propensity of the aldehydes to be reduced under physiological conditions and is responsible for reoxidizing 1-hydroxy-2-hydroxymethyl-3-pent-1,3-dienylbenzene back to the salicylic aldehyde. This salicylic aldehyde is then selectively epoxidized by the cupin-domain-containing oxidoreductase srdB to yield the epoxide, which can be hydrolyzed stereoselectively by the hydrolase srdG to give the final product sordarial. This is FAD-dependent monooxygenase srdH from Neurospora crassa (strain ATCC 24698 / 74-OR23-1A / CBS 708.71 / DSM 1257 / FGSC 987).